Reading from the N-terminus, the 122-residue chain is Large ribosomal subunit protein uL14 (122 aa).

The protein belongs to the universal ribosomal protein uL14 family. As to quaternary structure, part of the 50S ribosomal subunit. Forms a cluster with proteins L3 and L19. In the 70S ribosome, L14 and L19 interact and together make contacts with the 16S rRNA in bridges B5 and B8.

Its function is as follows. Binds to 23S rRNA. Forms part of two intersubunit bridges in the 70S ribosome. This Flavobacterium johnsoniae (strain ATCC 17061 / DSM 2064 / JCM 8514 / BCRC 14874 / CCUG 350202 / NBRC 14942 / NCIMB 11054 / UW101) (Cytophaga johnsonae) protein is Large ribosomal subunit protein uL14.